Reading from the N-terminus, the 401-residue chain is Chorismate synthase (401 aa).

The NADP(+) site is built by arginine 40 and arginine 46. Residues 135-137, 256-257, glycine 300, 315-319, and arginine 341 each bind FMN; these read RAS, QA, and KPIST.

This sequence belongs to the chorismate synthase family. In terms of assembly, homotetramer. FMNH2 is required as a cofactor.

The catalysed reaction is 5-O-(1-carboxyvinyl)-3-phosphoshikimate = chorismate + phosphate. Its pathway is metabolic intermediate biosynthesis; chorismate biosynthesis; chorismate from D-erythrose 4-phosphate and phosphoenolpyruvate: step 7/7. Catalyzes the anti-1,4-elimination of the C-3 phosphate and the C-6 proR hydrogen from 5-enolpyruvylshikimate-3-phosphate (EPSP) to yield chorismate, which is the branch point compound that serves as the starting substrate for the three terminal pathways of aromatic amino acid biosynthesis. This reaction introduces a second double bond into the aromatic ring system. This is Chorismate synthase from Mycobacterium bovis (strain BCG / Pasteur 1173P2).